Here is a 405-residue protein sequence, read N- to C-terminus: Nodal homolog 2-A (405 aa).

The signal sequence occupies residues 1–18 (MASLGVILFFVIASLIHG). The propeptide occupies 19–282 (KPIHSERKAA…RVTDTRRPRR (264 aa)). 3 N-linked (GlcNAc...) asparagine glycosylation sites follow: Asn71, Asn172, and Asn343. 3 cysteine pairs are disulfide-bonded: Cys305–Cys371, Cys334–Cys402, and Cys338–Cys404.

The protein belongs to the TGF-beta family. As to quaternary structure, homodimer; disulfide-linked. Forms heterodimers with the TGF-beta family member derriere. Interacts with tsku; enhances nodal2 activity. First localized to the vegetal region of the blastula. Just prior to gastrulation (stage 10), this expression disappears and instead becomes localized to the dorsal marginal zone, with enrichment in the organizer.

The protein resides in the secreted. Cooperation and regulatory loops of multiple nodals are essential for mesendoderm patterning in early embryos. Essential for mesoderm formation and axial patterning during embryonic development. Activates the activin-like signaling pathway to induce dorsal and ventral mesoderm in animal cap ectoderm. In addition, also dorsalizes ventral marginal zone (VMZ) tissues during gastrulation. Induces muscle actin. Appears to act as both a short-range and long-range morphogen. The unprocessed protein inhibits bmp- and wnt-signaling. This Xenopus laevis (African clawed frog) protein is Nodal homolog 2-A (nodal2-a).